The chain runs to 346 residues: Parapinopsin (346 aa).

Residues 1 to 29 (MASIILINFSETDTLHLGSVNDHIMPRIG) lie on the Extracellular side of the membrane. An N-linked (GlcNAc...) asparagine glycan is attached at Asn8. Residues 30 to 54 (YTILSIIMALSSTFGIILNMVVIIV) form a helical membrane-spanning segment. Residues 55 to 66 (TVRYKQLRQPLN) are Cytoplasmic-facing. The chain crosses the membrane as a helical span at residues 67–91 (YALVNLAVADLGCPVFGGLLTAVTN). Topologically, residues 92-106 (AMGYFSLGRVGCVLE) are extracellular. Cysteines 103 and 180 form a disulfide. Residues 107 to 126 (GFAVAFFGIAGLCSVAVIAV) traverse the membrane as a helical segment. Topologically, residues 127-145 (DRYMVVCRPLGAVMFQTKH) are cytoplasmic. The chain crosses the membrane as a helical span at residues 146 to 169 (ALAGVVFSWVWSFIWNTPPLFGWG). Topologically, residues 170-193 (SYQLEGVMTSCAPNWYRRDPVNVS) are extracellular. N-linked (GlcNAc...) asparagine glycosylation is present at Asn191. Residues 194-221 (YILCYFMLCFALPFATIIFSYMHLLHTL) traverse the membrane as a helical segment. Topologically, residues 222–244 (WQVAKLQVADSGSTAKVEVQVAR) are cytoplasmic. Residues 245-268 (MVVIMVMAFLLTWLPYAAFALTVI) form a helical membrane-spanning segment. Over 269 to 276 (IDSNIYIN) the chain is Extracellular. A helical membrane pass occupies residues 277-301 (PVIGTIPAYLAKSSTVFNPIIYIFM). Lys288 is modified (N6-(retinylidene)lysine). Over 302–346 (NRQFRDYALPCLLCGKNPWAAKEGRDSDTNTLTTTVSKNTSVSPL) the chain is Cytoplasmic. Cys315 is lipidated: S-palmitoyl cysteine. A disordered region spans residues 325–346 (GRDSDTNTLTTTVSKNTSVSPL). Low complexity predominate over residues 330–346 (TNTLTTTVSKNTSVSPL).

This sequence belongs to the G-protein coupled receptor 1 family. Opsin subfamily. Phosphorylated on some or all of the serine and threonine residues present in the C-terminal region. In terms of tissue distribution, parapineal organ.

It localises to the membrane. This is Parapinopsin from Ictalurus punctatus (Channel catfish).